A 526-amino-acid polypeptide reads, in one-letter code: Arylsulfatase G (526 aa).

An N-terminal signal peptide occupies residues methionine 1 to serine 16. The Ca(2+) site is built by aspartate 44, aspartate 45, and cysteine 84. Cysteine 84 serves as the catalytic Nucleophile. A 3-oxoalanine (Cys) modification is found at cysteine 84. Asparagine 117 carries N-linked (GlcNAc...) asparagine glycosylation. Lysine 137 contributes to the substrate binding site. Histidine 139 is a catalytic residue. Serine 162 is a binding site for substrate. The N-linked (GlcNAc...) asparagine glycan is linked to asparagine 215. Histidine 251 is a binding site for substrate. Residues aspartate 302 and asparagine 303 each coordinate Ca(2+). 2 N-linked (GlcNAc...) asparagine glycosylation sites follow: asparagine 356 and asparagine 497.

This sequence belongs to the sulfatase family. Ca(2+) serves as cofactor. Post-translationally, N-glycosylated with both high mannose and complex type sugars. In terms of processing, the conversion to 3-oxoalanine (also known as C-formylglycine, FGly), of a serine or cysteine residue in prokaryotes and of a cysteine residue in eukaryotes, is critical for catalytic activity. 63-kDa precursor undergoes proteolytic processing in two steps, yielding two fragments in the first step (apparent molecular masses of 44 and 18 kDa). In the second step, the 44-kDa fragment is processed further to the 34- and 10-kDa chains. The 10-kDa chain is a cleavage product of the 44-kDa fragment but linked to the 18-kDa chain through a disulfide bridge.

It is found in the lysosome. The enzyme catalyses an aryl sulfate + H2O = a phenol + sulfate + H(+). The catalysed reaction is Hydrolysis of the 3-sulfate groups of the N-sulfo-D-glucosamine 3-O-sulfate units of heparin.. In terms of biological role, displays arylsulfatase activity at acidic pH towards the artificial substrate p-nitrocatechol sulfate. Catalyzes the hydrolysis of the 3-sulfate groups of the N-sulfo-D-glucosamine 3-O-sulfate units of heparin. The polypeptide is Arylsulfatase G (Arsg) (Rattus norvegicus (Rat)).